A 324-amino-acid chain; its full sequence is Probable nicotianamine synthase 4 (324 aa).

Belongs to the nicotianamine synthase (NAS)-like family.

It catalyses the reaction 3 S-adenosyl-L-methionine = nicotianamine + 3 S-methyl-5'-thioadenosine + 3 H(+). Synthesizes nicotianamine, a polyamine which serves as a sensor for the physiological iron status within the plant, and/or might be involved in the transport of iron. The polypeptide is Probable nicotianamine synthase 4 (NAS4) (Arabidopsis thaliana (Mouse-ear cress)).